Consider the following 261-residue polypeptide: Global transcriptional regulator CodY (261 aa).

The interval 1 to 159 is GAF domain; it reads MPNLLEKTRK…ASTVVGIQLL (159 aa). Residues 207–226 constitute a DNA-binding region (H-T-H motif); that stretch reads ASVIADRIGITRSVIVNALR.

The protein belongs to the CodY family.

It localises to the cytoplasm. In terms of biological role, DNA-binding global transcriptional regulator which is involved in the adaptive response to starvation and acts by directly or indirectly controlling the expression of numerous genes in response to nutrient availability. During rapid exponential growth, CodY is highly active and represses genes whose products allow adaptation to nutrient depletion. The chain is Global transcriptional regulator CodY from Streptococcus agalactiae serotype III (strain NEM316).